Reading from the N-terminus, the 321-residue chain is Mas-related G-protein coupled receptor member H (321 aa).

Over 1-35 (MEPLAMTLYPLESTQPTRNKTPNETTWSSEHTDDH) the chain is Extracellular. An N-linked (GlcNAc...) asparagine glycan is attached at Asn-23. The helical transmembrane segment at 36-56 (TYFLVSLVICSLGLAGNGLLI) threads the bilayer. Topologically, residues 57–71 (WFLIFCIKRKPFTIY) are cytoplasmic. Residues 72-92 (ILHLAIADFMVLLCSSIMKLV) traverse the membrane as a helical segment. The Extracellular segment spans residues 93–102 (NTFHIYNMTL). Asn-99 carries an N-linked (GlcNAc...) asparagine glycan. A helical transmembrane segment spans residues 103–126 (ESYAILFMIFGYNTGLHLLTAISV). Residues 127-147 (ERCLSVLYPIWYQCQRPKHQS) are Cytoplasmic-facing. A helical transmembrane segment spans residues 148-168 (AVACMLLWALSVLVSGLENFF). At 169–188 (CILEVKPQFPECRYVYIFSC) the chain is on the extracellular side. The helical transmembrane segment at 189–209 (ILTFLVFVPLMIFSNLILFIQ) threads the bilayer. Residues 210–225 (VCCNLKPRQPTKLYVI) are Cytoplasmic-facing. Residues 226 to 246 (IMTTVILFLVFAMPMKVLLII) traverse the membrane as a helical segment. Position 247 (Gly-247) is a topological domain, extracellular. Residues 248–271 (YYSSSLDDSVWDSLPYLNMLSTIN) traverse the membrane as a helical segment. The Cytoplasmic portion of the chain corresponds to 272–320 (CSINPIVYFVVGSLRRKRSRKSLKEALQKVFEEKPVVASRENVTQFSLP).

The protein belongs to the G-protein coupled receptor 1 family. Mas subfamily.

It is found in the cell membrane. Its function is as follows. Orphan receptor. May regulate nociceptor function and/or development, including the sensation or modulation of pain. The polypeptide is Mas-related G-protein coupled receptor member H (Mrgprh) (Mus musculus (Mouse)).